Consider the following 184-residue polypeptide: Large ribosomal subunit protein uL5 (184 aa).

This sequence belongs to the universal ribosomal protein uL5 family. As to quaternary structure, part of the 50S ribosomal subunit; part of the 5S rRNA/L5/L18/L25 subcomplex. Contacts the 5S rRNA and the P site tRNA. Forms a bridge to the 30S subunit in the 70S ribosome.

Its function is as follows. This is one of the proteins that bind and probably mediate the attachment of the 5S RNA into the large ribosomal subunit, where it forms part of the central protuberance. In the 70S ribosome it contacts protein S13 of the 30S subunit (bridge B1b), connecting the 2 subunits; this bridge is implicated in subunit movement. Contacts the P site tRNA; the 5S rRNA and some of its associated proteins might help stabilize positioning of ribosome-bound tRNAs. The chain is Large ribosomal subunit protein uL5 from Wolinella succinogenes (strain ATCC 29543 / DSM 1740 / CCUG 13145 / JCM 31913 / LMG 7466 / NCTC 11488 / FDC 602W) (Vibrio succinogenes).